Consider the following 255-residue polypeptide: Dehydrogenase/reductase SDR family member 11 (255 aa).

An N-terminal signal peptide occupies residues 1–23 (MERWTGRVALVTGASVGIGAAVA). NADP(+)-binding positions include 13 to 18 (GASVGI), 38 to 39 (RS), glutamate 44, 65 to 66 (DL), and asparagine 92. The substrate site is built by serine 146 and tyrosine 161. NADP(+) is bound by residues tyrosine 161, lysine 165, 196-199 (VETG), and lysine 203. Tyrosine 161 acts as the Proton acceptor in catalysis.

Belongs to the short-chain dehydrogenases/reductases (SDR) family.

Its subcellular location is the secreted. The enzyme catalyses a 3beta-hydroxysteroid + NADP(+) = a 3-oxosteroid + NADPH + H(+). It carries out the reaction 17beta-estradiol + NAD(+) = estrone + NADH + H(+). The catalysed reaction is 17beta-estradiol + NADP(+) = estrone + NADPH + H(+). It participates in steroid biosynthesis; estrogen biosynthesis. With respect to regulation, inhibited by flavonoids including apigenin, luteolin, genistein, kaempferol and quercetin and also by carbenoxolone, zearalenone, glycyrrhetinic, curcumin and flufenamic acid. Its function is as follows. Catalyzes the conversion of the 17-keto group of estrone, 4- and 5-androstenes and 5-alpha-androstanes into their 17-beta-hydroxyl metabolites and the conversion of the 3-keto group of 3-, 3,17- and 3,20- diketosteroids into their 3-hydroxyl metabolites. Exhibits reductive 3-beta-hydroxysteroid dehydrogenase activity toward 5-beta-androstanes, 5-beta-pregnanes, 4-pregnenes and bile acids. May also reduce endogenous and exogenous alpha-dicarbonyl compounds and xenobiotic alicyclic ketones. This is Dehydrogenase/reductase SDR family member 11 (DHRS11) from Gallus gallus (Chicken).